We begin with the raw amino-acid sequence, 882 residues long: DNA mismatch repair protein MutS (882 aa).

An ATP-binding site is contributed by 656-663 (GPNASGKS).

Belongs to the DNA mismatch repair MutS family.

This protein is involved in the repair of mismatches in DNA. It is possible that it carries out the mismatch recognition step. This protein has a weak ATPase activity. The sequence is that of DNA mismatch repair protein MutS from Synechococcus elongatus (strain ATCC 33912 / PCC 7942 / FACHB-805) (Anacystis nidulans R2).